A 353-amino-acid chain; its full sequence is Protein Wnt-11b-1 (353 aa).

The first 22 residues, 1-22 (MAQIHHCVTLLLILCCSGLCGA), serve as a signal peptide directing secretion. Asparagine 31, asparagine 38, and asparagine 88 each carry an N-linked (GlcNAc...) asparagine glycan. Intrachain disulfides connect cysteine 78–cysteine 89, cysteine 128–cysteine 136, cysteine 138–cysteine 155, cysteine 208–cysteine 222, and cysteine 210–cysteine 217. A lipid anchor (O-palmitoleoyl serine; by PORCN) is attached at serine 214. Tyrosine 274 and tyrosine 281 each carry sulfotyrosine. 6 disulfide bridges follow: cysteine 282–cysteine 313, cysteine 298–cysteine 308, cysteine 312–cysteine 352, cysteine 328–cysteine 343, cysteine 330–cysteine 340, and cysteine 335–cysteine 336. Asparagine 299 carries N-linked (GlcNAc...) asparagine glycosylation.

The protein belongs to the Wnt family. In terms of assembly, homodimer. Secreted homodimers form a complex with wnt5a homodimers; tyrosine sulfation of both wnt11 and wnt5a by tpst1 is required for this interaction. Interacts with the transmembrane receptor fzd7/fz7. Interacts with lrp6 and ryk. Interacts with tdgf1/frl1. Interacts weakly with frzb1 and strongly with frzb2/crescent. Interaction with frzb2/crescent antagonizes wnt11 function in the neuroectoderm, but enhances it in mesodermal tissue. Glycosylation is required for protein secretion. In terms of processing, palmitoleoylation is required for efficient binding to frizzled receptors. Depalmitoleoylation leads to Wnt signaling pathway inhibition.

It localises to the secreted. It is found in the extracellular space. The protein resides in the extracellular matrix. Functionally, ligand for the frizzled7 transmembrane receptor. Primarily acts via non-canonical Wnt pathways mediated by either Ca(2+) and PKC, or by JNK and dvl2/dsh. Depending on the cellular context, can also signal via the canonical Wnt pathway mediated by beta-catenin and dvl2/dsh. May also inhibit canonical Wnt signaling. Maternally initiates dorsal/ventral axis formation by a canonical route, which signals via lrp6. In a complex with wnt5a, activates the canonical and non-canonical processes involved in axis formation. In the non-canonical pathway, acts through fzd7/fz7 to induce phosphorylation of dvl2/dsh. Signals through a non-canonical Wnt pathway to regulate convergent extension movements during gastrulation. Interactions with the secreted Wnt antagonist sfrp5 to coordinate foregut development, acting via a non-canonical wnt pathway whereby sfrp5 restricts wnt11b activity to prevent inappropriate foregut formation. Mediates cardiogenesis via non-canonical Wnt signaling involving JNK-activation and PKC. Acts redundantly with wnt11/wnt11r during pronephros induction. In Xenopus tropicalis (Western clawed frog), this protein is Protein Wnt-11b-1.